A 138-amino-acid chain; its full sequence is Glutathione S-transferase Mu 5 (138 aa).

Phosphoserine is present on Ser1. Positions 1 to 71 (SMVLGYWDIR…KITQSNAILR (71 aa)) constitute a GST N-terminal domain. Residues 6-7 (YW), 39-43 (WLDVK), 52-53 (NL), and 65-66 (QS) each bind glutathione. The GST C-terminal domain maps to 72–135 (IRVDIMENQI…FMCRCFKMPI (64 aa)).

The protein belongs to the GST superfamily. Mu family. As to quaternary structure, homodimer.

It localises to the cytoplasm. It catalyses the reaction RX + glutathione = an S-substituted glutathione + a halide anion + H(+). In terms of biological role, conjugation of reduced glutathione to a wide number of exogenous and endogenous hydrophobic electrophiles. This chain is Glutathione S-transferase Mu 5, found in Mesocricetus auratus (Golden hamster).